The following is a 267-amino-acid chain: Indole-3-glycerol phosphate synthase (267 aa).

This sequence belongs to the TrpC family.

The catalysed reaction is 1-(2-carboxyphenylamino)-1-deoxy-D-ribulose 5-phosphate + H(+) = (1S,2R)-1-C-(indol-3-yl)glycerol 3-phosphate + CO2 + H2O. The protein operates within amino-acid biosynthesis; L-tryptophan biosynthesis; L-tryptophan from chorismate: step 4/5. This is Indole-3-glycerol phosphate synthase from Ralstonia pickettii (strain 12J).